Reading from the N-terminus, the 43-residue chain is Probable intron-encoded DNA endonuclease 2 (43 aa).

This sequence belongs to the LAGLIDADG endonuclease family.

It is found in the mitochondrion. Its function is as follows. Mitochondrial DNA endonuclease involved in intron homing. In Mycosarcoma maydis (Corn smut fungus), this protein is Probable intron-encoded DNA endonuclease 2 (hegI2).